Here is a 289-residue protein sequence, read N- to C-terminus: E3 ubiquitin-protein ligase MARCHF5 (289 aa).

The segment at 4-73 adopts an RING-CH-type zinc-finger fold; the sequence is VDEPPEKHCW…PQCGTEYRIV (70 aa). 8 residues coordinate Zn(2+): C12, C15, C31, C33, H41, C44, C63, and C66. The next 4 membrane-spanning stretches (helical) occupy residues 97 to 117, 137 to 157, 202 to 222, and 236 to 256; these read FAAAGVVVGTVYWSAVTYGAV, PLFLLMGLPTIPVMLVLGKMI, LSVSRTLCGALIFPSIANLVG, and TILGGIAFVVMKGVLKVYFKQ.

The protein resides in the mitochondrion outer membrane. The protein localises to the endoplasmic reticulum membrane. The catalysed reaction is S-ubiquitinyl-[E2 ubiquitin-conjugating enzyme]-L-cysteine + [acceptor protein]-L-lysine = [E2 ubiquitin-conjugating enzyme]-L-cysteine + N(6)-ubiquitinyl-[acceptor protein]-L-lysine.. The protein operates within protein modification; protein ubiquitination. Mitochondrial E3 ubiquitin-protein ligase that plays a crucial role in the control of mitochondrial morphology by acting as a positive regulator of mitochondrial fission. May play a role in the prevention of cell senescence acting as a regulator of mitochondrial quality control. The sequence is that of E3 ubiquitin-protein ligase MARCHF5 (marchf5) from Danio rerio (Zebrafish).